Consider the following 60-residue polypeptide: Large ribosomal subunit protein bL33 (60 aa).

It belongs to the bacterial ribosomal protein bL33 family.

The sequence is that of Large ribosomal subunit protein bL33 from Chlorobium limicola (strain DSM 245 / NBRC 103803 / 6330).